We begin with the raw amino-acid sequence, 145 residues long: D-aminoacyl-tRNA deacylase (145 aa).

A Gly-cisPro motif, important for rejection of L-amino acids motif is present at residues 137–138 (GP).

Belongs to the DTD family. Homodimer.

It localises to the cytoplasm. It catalyses the reaction glycyl-tRNA(Ala) + H2O = tRNA(Ala) + glycine + H(+). The enzyme catalyses a D-aminoacyl-tRNA + H2O = a tRNA + a D-alpha-amino acid + H(+). Its function is as follows. An aminoacyl-tRNA editing enzyme that deacylates mischarged D-aminoacyl-tRNAs. Also deacylates mischarged glycyl-tRNA(Ala), protecting cells against glycine mischarging by AlaRS. Acts via tRNA-based rather than protein-based catalysis; rejects L-amino acids rather than detecting D-amino acids in the active site. By recycling D-aminoacyl-tRNA to D-amino acids and free tRNA molecules, this enzyme counteracts the toxicity associated with the formation of D-aminoacyl-tRNA entities in vivo and helps enforce protein L-homochirality. This chain is D-aminoacyl-tRNA deacylase, found in Shewanella sp. (strain MR-4).